A 334-amino-acid chain; its full sequence is Protein FAM50B (334 aa).

Residue alanine 2 is modified to N-acetylalanine. Positions phenylalanine 122–arginine 175 are disordered. Basic and acidic residues-rich tracts occupy residues glutamate 132 to glutamate 141 and proline 163 to arginine 175.

This sequence belongs to the FAM50 family. Widely expressed. Abundant in testis, where it is expressed in seminiferous tubules, not in the interstitium. At the cellular level, expressed in primary spermatocytes and round spermatids, but not detectable in spermatogonia, elongating spermatids, mature spermatozoa, Sertoli cells or Leydig cells.

In Mus musculus (Mouse), this protein is Protein FAM50B (Fam50b).